Here is a 458-residue protein sequence, read N- to C-terminus: Glycogen synthase (458 aa).

K15 contributes to the ADP-alpha-D-glucose binding site.

The protein belongs to the glycosyltransferase 1 family. Bacterial/plant glycogen synthase subfamily.

It carries out the reaction [(1-&gt;4)-alpha-D-glucosyl](n) + ADP-alpha-D-glucose = [(1-&gt;4)-alpha-D-glucosyl](n+1) + ADP + H(+). Its pathway is glycan biosynthesis; glycogen biosynthesis. In terms of biological role, synthesizes alpha-1,4-glucan chains using ADP-glucose. The protein is Glycogen synthase of Gloeobacter violaceus (strain ATCC 29082 / PCC 7421).